The following is an 840-amino-acid chain: Mechanosensitive ion channel protein Msy2 (840 aa).

At 1 to 68 (MNEHRREPHR…WFNNLSFITR (68 aa)) the chain is on the cytoplasmic side. A helical membrane pass occupies residues 69 to 89 (WITIWFPLAGALVIPLAVGVS). Over 90–100 (PYPNAKLGGVR) the chain is Lumenal. A helical transmembrane segment spans residues 101 to 121 (IFWIFVWLEVAWGGFWVSRVI). Over 122–126 (ARLLP) the chain is Cytoplasmic. The helical transmembrane segment at 127–147 (YILYPLMGILPFTMYKYTVIL) threads the bilayer. Over 148-151 (TALE) the chain is Lumenal. The helical transmembrane segment at 152–172 (MPLAIFFCSIVCVCTFSPIMI) threads the bilayer. Over 173–225 (GKGNFTSTTVTTTTSATATPTASASSNAVESVFVTKTAASVPSWIKVITKILG) the chain is Cytoplasmic. Residues 226 to 246 (AAVVTSIVLLLEKIFLHFIGF) traverse the membrane as a helical segment. The Lumenal portion of the chain corresponds to 247-449 (HYHEVQYQYR…LALGKLDRVG (203 aa)). The region spanning 392-427 (IPDDEINDIFHILDNDYSRTVTLDEMEQFTREISIE) is the EF-hand domain. Residues 450 to 491 (LGVVGIIAVLTFISFLDTSFATILAAFGTTLLSLSFVFSTSA) form a helical membrane-spanning segment. Residues 492 to 840 (QELMSSIIFL…SQNMDGQIQY (349 aa)) lie on the Cytoplasmic side of the membrane. 2 disordered regions span residues 677–730 (EYSK…KRED) and 775–819 (ESNG…NTQA). A compositionally biased stretch (low complexity) spans 688 to 700 (SDISSTASSNSLS). Basic and acidic residues predominate over residues 708–730 (SESRNYHTHDEDNSSDDNHKRED). The span at 776 to 819 (SNGNANGDNTATNSQGATDNGQTTTNTTQNNVDNTQATTDNTQA) shows a compositional bias: low complexity.

The protein belongs to the MscS (TC 1.A.23) family.

It localises to the endoplasmic reticulum membrane. In terms of biological role, regulates intracellular calcium levels and cell volume for survival in response to hypo-osmotic shock. Involved in maintaining vacuole integrity and protecting the nuclear envelope upon hypo-osmotic shock. The polypeptide is Mechanosensitive ion channel protein Msy2 (Schizosaccharomyces pombe (strain 972 / ATCC 24843) (Fission yeast)).